A 285-amino-acid chain; its full sequence is tRNA uridine(34) hydroxylase (285 aa).

Residues 130 to 225 (RGDDVVFFDG…YGEAFGDTGL (96 aa)) enclose the Rhodanese domain. Cys-185 functions as the Cysteine persulfide intermediate in the catalytic mechanism.

The protein belongs to the TrhO family.

The catalysed reaction is uridine(34) in tRNA + AH2 + O2 = 5-hydroxyuridine(34) in tRNA + A + H2O. Catalyzes oxygen-dependent 5-hydroxyuridine (ho5U) modification at position 34 in tRNAs. In Rhodococcus opacus (strain B4), this protein is tRNA uridine(34) hydroxylase.